The sequence spans 473 residues: Bifunctional protein HldE (473 aa).

Positions 1-318 (MKLSMPRFDQ…RAIQREEGSE (318 aa)) are ribokinase. Residue 194–197 (NLSE) participates in ATP binding. Asp263 is an active-site residue. A cytidylyltransferase region spans residues 343 to 473 (FTNGCFDILH…TAIVEKIRKN (131 aa)).

The protein in the N-terminal section; belongs to the carbohydrate kinase PfkB family. This sequence in the C-terminal section; belongs to the cytidylyltransferase family. Homodimer.

It carries out the reaction D-glycero-beta-D-manno-heptose 7-phosphate + ATP = D-glycero-beta-D-manno-heptose 1,7-bisphosphate + ADP + H(+). The enzyme catalyses D-glycero-beta-D-manno-heptose 1-phosphate + ATP + H(+) = ADP-D-glycero-beta-D-manno-heptose + diphosphate. It functions in the pathway nucleotide-sugar biosynthesis; ADP-L-glycero-beta-D-manno-heptose biosynthesis; ADP-L-glycero-beta-D-manno-heptose from D-glycero-beta-D-manno-heptose 7-phosphate: step 1/4. The protein operates within nucleotide-sugar biosynthesis; ADP-L-glycero-beta-D-manno-heptose biosynthesis; ADP-L-glycero-beta-D-manno-heptose from D-glycero-beta-D-manno-heptose 7-phosphate: step 3/4. Its function is as follows. Catalyzes the phosphorylation of D-glycero-D-manno-heptose 7-phosphate at the C-1 position to selectively form D-glycero-beta-D-manno-heptose-1,7-bisphosphate. Catalyzes the ADP transfer from ATP to D-glycero-beta-D-manno-heptose 1-phosphate, yielding ADP-D-glycero-beta-D-manno-heptose. This chain is Bifunctional protein HldE, found in Pseudomonas putida (strain ATCC 47054 / DSM 6125 / CFBP 8728 / NCIMB 11950 / KT2440).